The chain runs to 186 residues: MSSRLLLQLLGFWLFLSQPCRARVSEEWMDQVIQVCGRGYARAWIEVCGASVGRLALSQEEPAPLARQATAEVVPSFINKDAEPFDMTLKCLPNLSEERKAALSEGRAPFPELQQHAPALSDSVVSLEGFKKTFHNQLGEAEDGGPPELKYLGSDAQSRKKRQSGALLSEQCCHIGCTRRSIAKLC.

Positions 1–22 (MSSRLLLQLLGFWLFLSQPCRA) are cleaved as a signal peptide. Disulfide bonds link cysteine 36–cysteine 173, cysteine 48–cysteine 186, and cysteine 172–cysteine 177. Residues 58–158 (SQEEPAPLAR…LKYLGSDAQS (101 aa)) constitute a propeptide, connecting peptide. At glutamine 163 the chain carries Pyrrolidone carboxylic acid.

Belongs to the insulin family. Heterodimer of a B chain and an A chain linked by two disulfide bonds.

It localises to the secreted. In terms of biological role, relaxin is an ovarian hormone that acts with estrogen to produce dilatation of the birth canal in many mammals. In Rattus norvegicus (Rat), this protein is Prorelaxin 1 (Rln1).